A 154-amino-acid chain; its full sequence is NADPH-dependent 7-cyano-7-deazaguanine reductase (154 aa).

A compositionally biased stretch (polar residues) spans 1-21; the sequence is MPNTDVSSLSMLGHQTETASS. The tract at residues 1-26 is disordered; the sequence is MPNTDVSSLSMLGHQTETASSPEEAV. C52 functions as the Thioimide intermediate in the catalytic mechanism. The active-site Proton donor is D59. Residues 74–76 and 93–94 each bind substrate; these read VES and HE.

This sequence belongs to the GTP cyclohydrolase I family. QueF type 1 subfamily.

It localises to the cytoplasm. It carries out the reaction 7-aminomethyl-7-carbaguanine + 2 NADP(+) = 7-cyano-7-deazaguanine + 2 NADPH + 3 H(+). It participates in tRNA modification; tRNA-queuosine biosynthesis. Its function is as follows. Catalyzes the NADPH-dependent reduction of 7-cyano-7-deazaguanine (preQ0) to 7-aminomethyl-7-deazaguanine (preQ1). This chain is NADPH-dependent 7-cyano-7-deazaguanine reductase, found in Rhizobium etli (strain ATCC 51251 / DSM 11541 / JCM 21823 / NBRC 15573 / CFN 42).